A 396-amino-acid polypeptide reads, in one-letter code: Elongation factor Tu (396 aa).

In terms of domain architecture, tr-type G spans 10–206; sequence KPHCNIGTIG…TVDAYIPQPE (197 aa). The G1 stretch occupies residues 19–26; sequence GHVDHGKT. 19-26 is a binding site for GTP; it reads GHVDHGKT. Threonine 26 serves as a coordination point for Mg(2+). Residues 60–64 are G2; it reads GITIS. The segment at 81–84 is G3; sequence DCPG. GTP is bound by residues 81-85 and 136-139; these read DCPGH and NKVD. The interval 136-139 is G4; sequence NKVD. The tract at residues 174-176 is G5; the sequence is SAL.

Belongs to the TRAFAC class translation factor GTPase superfamily. Classic translation factor GTPase family. EF-Tu/EF-1A subfamily. In terms of assembly, monomer.

The protein localises to the cytoplasm. The enzyme catalyses GTP + H2O = GDP + phosphate + H(+). In terms of biological role, GTP hydrolase that promotes the GTP-dependent binding of aminoacyl-tRNA to the A-site of ribosomes during protein biosynthesis. This is Elongation factor Tu from Methylocella silvestris (strain DSM 15510 / CIP 108128 / LMG 27833 / NCIMB 13906 / BL2).